The sequence spans 314 residues: MRSYSLIAPGKINLYLEIIGDRPDGYHELAMVLQSISLADKIHIRSIGIETIVVRCDHPLVPQDVDNIAYRAASLMSKEFPEVFARYGGVEITINKYIPMAAGLAGGSTNAAAVLVGLDLMWELGLTHRELQELGARLGSDVPFCIGGGTALGTRRGEILSPLPNLDHIYVVLAKYKNLSISTPWAYKTYRQKFGHTYISDTESQKSSRQRVHSGPMVSAIVEHNYKEVGELLHNDLEKVALSEYPQLLKLREAFASENVLGTMMSGSGPTMFALTESQSQAEEVRAAVKEKMADPDLEFWIAQFNSSGISIAH.

The active site involves Lys-11. 99–109 (PMAAGLAGGST) serves as a coordination point for ATP. Asp-141 is a catalytic residue.

This sequence belongs to the GHMP kinase family. IspE subfamily.

The enzyme catalyses 4-CDP-2-C-methyl-D-erythritol + ATP = 4-CDP-2-C-methyl-D-erythritol 2-phosphate + ADP + H(+). The protein operates within isoprenoid biosynthesis; isopentenyl diphosphate biosynthesis via DXP pathway; isopentenyl diphosphate from 1-deoxy-D-xylulose 5-phosphate: step 3/6. Functionally, catalyzes the phosphorylation of the position 2 hydroxy group of 4-diphosphocytidyl-2C-methyl-D-erythritol. The polypeptide is 4-diphosphocytidyl-2-C-methyl-D-erythritol kinase (Trichodesmium erythraeum (strain IMS101)).